The primary structure comprises 444 residues: Maintenance of mitochondrial morphology protein 1 (444 aa).

Positions 1-16 are enriched in polar residues; the sequence is MKGVENTLSQSESVNR. The segment at 1 to 20 is disordered; that stretch reads MKGVENTLSQSESVNRGYNG. Topologically, residues 1 to 107 are lumenal; the sequence is MKGVENTLSQ…TFSSRSFAEG (107 aa). A helical membrane pass occupies residues 108–128; that stretch reads LVVGQLSVIVVLIFFIKFFIF. The Cytoplasmic portion of the chain corresponds to 129–444; that stretch reads SDGPAKTGGG…QEEDPSRAPE (316 aa). The segment at 136 to 157 is disordered; it reads GGGGGSSAESRSSGFTGSPLTS. Positions 142–157 are enriched in low complexity; it reads SAESRSSGFTGSPLTS. One can recognise an SMP-LTD domain in the interval 204–418; the sequence is SPESLDWFNV…EPRFQFVKLP (215 aa). The tract at residues 425–444 is disordered; that stretch reads KNTREEKSDMQEEDPSRAPE. A compositionally biased stretch (basic and acidic residues) spans 426 to 444; that stretch reads NTREEKSDMQEEDPSRAPE.

Belongs to the MMM1 family. As to quaternary structure, homodimer. Component of the ER-mitochondria encounter structure (ERMES) or MDM complex, composed of MMM1, MDM10, MDM12 and MDM34. An MMM1 homodimer associates with one molecule of MDM12 on each side in a pairwise head-to-tail manner, and the SMP-LTD domains of MMM1 and MDM12 generate a continuous hydrophobic tunnel for phospholipid trafficking.

The protein resides in the endoplasmic reticulum membrane. In terms of biological role, component of the ERMES/MDM complex, which serves as a molecular tether to connect the endoplasmic reticulum (ER) and mitochondria. Components of this complex are involved in the control of mitochondrial shape and protein biogenesis, and function in nonvesicular lipid trafficking between the ER and mitochondria. The MDM12-MMM1 subcomplex functions in the major beta-barrel assembly pathway that is responsible for biogenesis of all outer membrane beta-barrel proteins, and acts in a late step after the SAM complex. The MDM10-MDM12-MMM1 subcomplex further acts in the TOM40-specific pathway after the action of the MDM12-MMM1 complex. Essential for establishing and maintaining the structure of mitochondria and maintenance of mtDNA nucleoids. The sequence is that of Maintenance of mitochondrial morphology protein 1 from Eremothecium gossypii (strain ATCC 10895 / CBS 109.51 / FGSC 9923 / NRRL Y-1056) (Yeast).